Here is a 120-residue protein sequence, read N- to C-terminus: NAD(P)H-quinone oxidoreductase subunit 3, chloroplastic (120 aa).

3 helical membrane-spanning segments follow: residues I9–G29, M64–M84, and V88–S108.

Belongs to the complex I subunit 3 family. NDH is composed of at least 16 different subunits, 5 of which are encoded in the nucleus.

The protein resides in the plastid. Its subcellular location is the chloroplast thylakoid membrane. The enzyme catalyses a plastoquinone + NADH + (n+1) H(+)(in) = a plastoquinol + NAD(+) + n H(+)(out). It catalyses the reaction a plastoquinone + NADPH + (n+1) H(+)(in) = a plastoquinol + NADP(+) + n H(+)(out). Functionally, NDH shuttles electrons from NAD(P)H:plastoquinone, via FMN and iron-sulfur (Fe-S) centers, to quinones in the photosynthetic chain and possibly in a chloroplast respiratory chain. The immediate electron acceptor for the enzyme in this species is believed to be plastoquinone. Couples the redox reaction to proton translocation, and thus conserves the redox energy in a proton gradient. The polypeptide is NAD(P)H-quinone oxidoreductase subunit 3, chloroplastic (Carica papaya (Papaya)).